A 138-amino-acid polypeptide reads, in one-letter code: Putative esterase HI_1161 (138 aa).

The protein belongs to the thioesterase PaaI family.

This is Putative esterase HI_1161 from Haemophilus influenzae (strain ATCC 51907 / DSM 11121 / KW20 / Rd).